A 344-amino-acid polypeptide reads, in one-letter code: L-lactate dehydrogenase B (344 aa).

NAD(+) is bound by residues 62-67 (DALPDK) and R109. Residues R116, N148, and R179 each coordinate substrate. N148 contacts NAD(+). H203 (proton acceptor) is an active-site residue. Position 258 (T258) interacts with substrate.

It belongs to the LDH/MDH superfamily. LDH family. In terms of assembly, tetramer that arise from random association of LDH-A and LDH-B.

The catalysed reaction is (S)-lactate + NAD(+) = pyruvate + NADH + H(+). Its pathway is fermentation; pyruvate fermentation to lactate; (S)-lactate from pyruvate: step 1/1. The sequence is that of L-lactate dehydrogenase B from Hordeum vulgare (Barley).